We begin with the raw amino-acid sequence, 301 residues long: tRNA dimethylallyltransferase (301 aa).

8-15 (GATGTGKS) provides a ligand contact to ATP. Residue 10-15 (TGTGKS) participates in substrate binding. The interval 33 to 36 (DSMQ) is interaction with substrate tRNA.

This sequence belongs to the IPP transferase family. In terms of assembly, monomer. Mg(2+) serves as cofactor.

It catalyses the reaction adenosine(37) in tRNA + dimethylallyl diphosphate = N(6)-dimethylallyladenosine(37) in tRNA + diphosphate. Functionally, catalyzes the transfer of a dimethylallyl group onto the adenine at position 37 in tRNAs that read codons beginning with uridine, leading to the formation of N6-(dimethylallyl)adenosine (i(6)A). This is tRNA dimethylallyltransferase from Tropheryma whipplei (strain Twist) (Whipple's bacillus).